Reading from the N-terminus, the 43-residue chain is MTLRECCDWCAAKWNQAIEDGDKAAADAYQQLYALWERRFKEA.

This is an uncharacterized protein from Escherichia coli (Bacteriophage T3).